Consider the following 492-residue polypeptide: Trigger factor (492 aa).

The 86-residue stretch at 169–254 (GDRVSIDYVG…VKEVSKPGEL (86 aa)) folds into the PPIase FKBP-type domain. Positions 441–492 (LMADDEDAETTTKAKPAKKAAAKKAEAKANEDEAEEPKKKAAPKKKAAKDAE) are disordered. Positions 463 to 479 (KKAEAKANEDEAEEPKK) are enriched in basic and acidic residues. Basic residues predominate over residues 480 to 492 (KAAPKKKAAKDAE).

It belongs to the FKBP-type PPIase family. Tig subfamily.

The protein localises to the cytoplasm. The enzyme catalyses [protein]-peptidylproline (omega=180) = [protein]-peptidylproline (omega=0). Involved in protein export. Acts as a chaperone by maintaining the newly synthesized protein in an open conformation. Functions as a peptidyl-prolyl cis-trans isomerase. This chain is Trigger factor, found in Mesorhizobium japonicum (strain LMG 29417 / CECT 9101 / MAFF 303099) (Mesorhizobium loti (strain MAFF 303099)).